A 98-amino-acid polypeptide reads, in one-letter code: Large ribosomal subunit protein uL23 (98 aa).

It belongs to the universal ribosomal protein uL23 family. Part of the 50S ribosomal subunit. Contacts protein L29, and trigger factor when it is bound to the ribosome.

Functionally, one of the early assembly proteins it binds 23S rRNA. One of the proteins that surrounds the polypeptide exit tunnel on the outside of the ribosome. Forms the main docking site for trigger factor binding to the ribosome. This is Large ribosomal subunit protein uL23 from Rickettsia felis (strain ATCC VR-1525 / URRWXCal2) (Rickettsia azadi).